The chain runs to 146 residues: Cyanate hydratase (146 aa).

Catalysis depends on residues arginine 87, glutamate 90, and serine 113.

This sequence belongs to the cyanase family.

The catalysed reaction is cyanate + hydrogencarbonate + 3 H(+) = NH4(+) + 2 CO2. Catalyzes the reaction of cyanate with bicarbonate to produce ammonia and carbon dioxide. The chain is Cyanate hydratase from Marinomonas sp. (strain MWYL1).